The chain runs to 394 residues: MSKEKFERTKPHVNVGTIGHVDHGKTTLTAAITTVLAKTYGGNARAFDQIDNAPEEKARGITISTSHVEYDTPSRHYAHVDCPGHADYVKNMITGAAQMDGAILVVAATDGPMPQTREHILLGRQVGVPYIIVFLNKCDMVDDEELLELVEMEVRELLSQYDFPGDDTPVIRGSALKALEGDAEWEAKIIELAEALDSYIPEPERAIDQPFLLPIEDVFSISGRGTVVTGRVERGIVKVGEEVEIVGIKDTTKTTCTGVEMFRKLLDEGRAGENVGVLLRGTKRDEIERGQVLAKPGSIKPHTTFESEVYILSKDEGGRHTPFFKGYRPQFYFRTTDVTGTIELPEGVEMVMPGDNIQMKVTLIAPIAMDQGLRFAIREGGRTVGAGVVAKVIA.

A tr-type G domain is found at 10-204; it reads KPHVNVGTIG…ALDSYIPEPE (195 aa). The tract at residues 19–26 is G1; it reads GHVDHGKT. 19-26 provides a ligand contact to GTP; sequence GHVDHGKT. T26 lines the Mg(2+) pocket. Positions 60 to 64 are G2; the sequence is GITIS. The interval 81–84 is G3; it reads DCPG. GTP is bound by residues 81–85 and 136–139; these read DCPGH and NKCD. The interval 136-139 is G4; it reads NKCD. Positions 174-176 are G5; that stretch reads SAL.

It belongs to the TRAFAC class translation factor GTPase superfamily. Classic translation factor GTPase family. EF-Tu/EF-1A subfamily. Monomer.

It localises to the cytoplasm. It catalyses the reaction GTP + H2O = GDP + phosphate + H(+). Its function is as follows. GTP hydrolase that promotes the GTP-dependent binding of aminoacyl-tRNA to the A-site of ribosomes during protein biosynthesis. The polypeptide is Elongation factor Tu 2 (Photorhabdus laumondii subsp. laumondii (strain DSM 15139 / CIP 105565 / TT01) (Photorhabdus luminescens subsp. laumondii)).